The sequence spans 389 residues: Mesotocin receptor (389 aa).

Residues 1-50 (MEGLCLNLDCSELPNSSWVNSSMENQNHSSNSTRDPLKRNEEVAKVEVTV) are Extracellular-facing. N-linked (GlcNAc...) asparagine glycans are attached at residues Asn-15, Asn-20, Asn-27, and Asn-31. Residues 51 to 71 (LALILFLALAGNICVLLGIYI) traverse the membrane as a helical segment. At 72–87 (NRHKHSRMYFFMKHLS) the chain is on the cytoplasmic side. Residues 88 to 108 (IADLVVAIFQVLPQLIWDITF) form a helical membrane-spanning segment. Residues 109 to 119 (RFYAPDLVCRL) lie on the Extracellular side of the membrane. Residues Cys-117 and Cys-192 are joined by a disulfide bond. The chain crosses the membrane as a helical span at residues 120-140 (VTYLQVVGMFASTYMLLLMSL). The Cytoplasmic portion of the chain corresponds to 141–159 (DRCLAICQPLRSLHRRSDC). A helical transmembrane segment spans residues 160–180 (VYVLFTWILSFLLSTPQTVIF). The Extracellular portion of the chain corresponds to 181–207 (SLTEVGNGVYDCRADFIQPWGPKAYIT). The chain crosses the membrane as a helical span at residues 208–228 (WITLAVYIIPVMILSVCYGLI). The Cytoplasmic portion of the chain corresponds to 229 to 275 (SYKIWQNIRLKTVCESNLRLSTSRRATLSRVSSVRLISKAKIRTVKM). The chain crosses the membrane as a helical span at residues 276 to 296 (TFIIVLAYIVCWTPFFFVQMW). At 297–308 (SVWDPNPPKEAS) the chain is on the extracellular side. The chain crosses the membrane as a helical span at residues 309 to 329 (LFIIAMLLGSLNSCCNPWIYM). The Cytoplasmic portion of the chain corresponds to 330-389 (LFTGHLFHDLLQSFLCCSARYLKTQQQGSDLSASRKSNSSTFVLSRKSSSQKSITQPSTA). The interval 360 to 389 (LSASRKSNSSTFVLSRKSSSQKSITQPSTA) is disordered.

It belongs to the G-protein coupled receptor 1 family. Vasopressin/oxytocin receptor subfamily. Highly expressed in the bladder. Also expressed in kidney, brain and skeletal muscle.

It is found in the cell membrane. Functionally, binds to mesotocin and may play a role in the regulation of water and salt transport. This chain is Mesotocin receptor, found in Rhinella marina (Cane toad).